The following is a 234-amino-acid chain: Uracil-DNA glycosylase (234 aa).

The Proton acceptor role is filled by Asp68.

This sequence belongs to the uracil-DNA glycosylase (UDG) superfamily. UNG family.

It localises to the cytoplasm. The enzyme catalyses Hydrolyzes single-stranded DNA or mismatched double-stranded DNA and polynucleotides, releasing free uracil.. Its function is as follows. Excises uracil residues from the DNA which can arise as a result of misincorporation of dUMP residues by DNA polymerase or due to deamination of cytosine. The polypeptide is Uracil-DNA glycosylase (Ruegeria sp. (strain TM1040) (Silicibacter sp.)).